We begin with the raw amino-acid sequence, 558 residues long: MSIVLFLIVFILLSLIVSRYLYSVALNVPSKIDVVFNPIEKLIYQLIGTKLEHMSGKTYIKHFLLFNGLMGGLSFVLLLIQQWLFLNPNHNLNQSVSLAFNTMASFLTNTNLQHYAGETDLSYLTQMCVITFLMFTSAASGYAVCIAMLRRLTGMTDVIGNFYQDITRFIVRVLIPFALIISLFLISQGTPQTLKGNLVIETLSGVKQTIAYGPMASLESIKHLGTNGGGFLGANSSTPFENPTYWSNYAEALSMMLIPGSLVFLFGRMLKTKLQIHPHAIMIFVAMFVMFIGFLVTCLYFEFAGNPVLHHLGIAGGNMEGKETRFGIGLSALFTTITTAFTTGTVNNMHDSLTPLGGMVPMVLMMLNAVFGGEGVGLMNMLIYVMLTVFICSLMIGKTPSYLGMKIEGKEMKLIALSFLVHPLLILVFSALAFIVPGASDALTNPQFHGVSQVLYEFTSSSANNGSGFEGLGDNTVFWNISTGIVMLLARYIPIVLQILIVSSLVNKKTYQQHTQDVPINNLFFSSVLIIFIILLSGLTFLPDLMLGPIGEQLLLHA.

The next 12 membrane-spanning stretches (helical) occupy residues 1-21 (MSIV…SRYL), 60-80 (IKHF…LLLI), 129-149 (VITF…IAML), 169-189 (FIVR…ISQG), 246-266 (WSNY…VFLF), 281-301 (IMIF…CLYF), 326-346 (FGIG…TGTV), 353-373 (LTPL…VFGG), 376-396 (VGLM…SLMI), 415-435 (IALS…LAFI), 485-505 (IVML…VSSL), and 523-543 (LFFS…TFLP).

It belongs to the KdpA family. In terms of assembly, the system is composed of three essential subunits: KdpA, KdpB and KdpC.

The protein resides in the cell membrane. Part of the high-affinity ATP-driven potassium transport (or Kdp) system, which catalyzes the hydrolysis of ATP coupled with the electrogenic transport of potassium into the cytoplasm. This subunit binds the extracellular potassium ions and delivers the ions to the membrane domain of KdpB through an intramembrane tunnel. This Staphylococcus aureus (strain Mu50 / ATCC 700699) protein is Potassium-transporting ATPase potassium-binding subunit 2.